The following is a 513-amino-acid chain: Noroxomaritidine synthase (513 aa).

A helical transmembrane segment spans residues 14-34; the sequence is HYPEILIAIACFLIFSLLLSA. Cys-458 lines the heme pocket.

The protein belongs to the cytochrome P450 family. Heme is required as a cofactor.

It localises to the membrane. It carries out the reaction 4'-O-methylnorbelladine + reduced [NADPH--hemoprotein reductase] + O2 = (10bS,4aR)-noroxomaritidine + oxidized [NADPH--hemoprotein reductase] + 2 H2O + H(+). The enzyme catalyses 4'-O-methylnorbelladine + reduced [NADPH--hemoprotein reductase] + O2 = (10bR,4aS)-noroxomaritidine + oxidized [NADPH--hemoprotein reductase] + 2 H2O + H(+). It functions in the pathway alkaloid biosynthesis. Its function is as follows. Cytochrome P450 that catalyzes an intramolecular para-para' C-C phenol coupling of 4'-O-methylnorbelladine in alkaloids biosynthesis, including haemanthamine- and crinamine-type alkaloids, promising anticancer agents. Catalyzes the formation of (10bR,4aS)-noroxomaritidine and (10bS,4aR)-noroxomaritidine from 4'-O-methylnorbelladine. Also produces N-demethylnarwedine as a minor product. Involved in the biosynthesis of haemanthamine. Can also use 4'-O-methyl-N-methylnorbelladine, (S)- and (R)-coclaurine as substrates, but not 3'-O-methylnorbelladine, 3',4'-O-dimethylnorbelladine, norbelladine, haemanthamine, (10bS,4aR)- or (10bR,4aS)-noroxomaritidine, isovanillin or tyramine. The polypeptide is Noroxomaritidine synthase (Narcissus aff. pseudonarcissus MK-2014 (Daffodil)).